We begin with the raw amino-acid sequence, 330 residues long: GDP-mannose transporter (330 aa).

The Cytoplasmic segment spans residues 1–13; the sequence is MSQLKVDNGPLSH. Residues 14-34 form a helical membrane-spanning segment; sequence VANSGPISIGAYCFSSIMMTV. At 35–48 the chain is on the lumenal side; the sequence is TNKFVVNLKGFNMN. Residues 49 to 69 form a helical membrane-spanning segment; sequence FVMLFVQAAVCVNLLFFLRLL. Topologically, residues 70–81 are cytoplasmic; sequence GYAKFRPLNRTD. Residues 82 to 98 traverse the membrane as a helical segment; that stretch reads AKNWFPITIFLVLMIYT. At 99–104 the chain is on the lumenal side; it reads SSKSLQ. Residues 105–124 form a helical membrane-spanning segment; sequence YLAVPIYTIFKNLTIILIAY. Topologically, residues 125–138 are cytoplasmic; that stretch reads GEVLFFGGSVTAME. A helical transmembrane segment spans residues 139-155; it reads LSSFLLMVLSSVVATLG. Residues 156-170 lie on the Lumenal side of the membrane; that stretch reads DQQALKKTADAGASL. The helical transmembrane segment at 171–191 threads the bilayer; sequence FNIGYMWMFINCLSSAAFVLV. Residues 192 to 203 are Cytoplasmic-facing; it reads MRKRIKLTNFKD. A helical transmembrane segment spans residues 204–224; the sequence is FDTMFYNNILSMPVLLALSFL. Over 225–241 the chain is Lumenal; that stretch reads MEDWSTENLTKNLSRDS. The chain crosses the membrane as a helical span at residues 242–262; that stretch reads VTAMIISGMTAVCISYCSGWC. Residues 263–269 are Cytoplasmic-facing; the sequence is VRVTSST. The helical transmembrane segment at 270-290 threads the bilayer; it reads TYSMVGALNKLPIALSGLIFF. Residues 291 to 294 are Lumenal-facing; the sequence is DAPK. A helical membrane pass occupies residues 295–315; the sequence is NFLSIFSIFLGFLSGIVYAVA. At 316 to 330 the chain is on the cytoplasmic side; that stretch reads KQKKQQNPQPSAPIK.

This sequence belongs to the TPT transporter family. SLC35D subfamily. As to quaternary structure, homooligomer.

It localises to the golgi apparatus membrane. Its subcellular location is the cytoplasmic vesicle membrane. The protein localises to the endoplasmic reticulum membrane. Involved in the import of GDP-mannose from the cytoplasm into the Golgi lumen. This chain is GDP-mannose transporter (VRG4), found in Kluyveromyces lactis (strain ATCC 8585 / CBS 2359 / DSM 70799 / NBRC 1267 / NRRL Y-1140 / WM37) (Yeast).